Consider the following 141-residue polypeptide: MAARLCCQLDSARDVLLLRPFGPQSSGPSFPRPAAGSAASSASSPSPSDESDLPLGRLPACFASASGPCCLVFTCAELRTMDSTVNFVSWHANRQLGMPSKDLWTPYIKDQLLTKWEEGSIDPRLSIFVLGGCRHKCMRLL.

The segment covering Q24–S48 has biased composition (low complexity). A disordered region spans residues Q24 to D52. The interval P68–L113 is mitochondrial targeting sequence.

Belongs to the orthohepadnavirus protein X family. In terms of assembly, may form homodimer. May interact with host CEBPA, CFLAR, CREB1, DDB1, E4F1, HBXIP, HSPD1/HSP60, NFKBIA, POLR2E and SMAD4. Interacts with host SMC5-SMC6 complex and induces its degradation. Interacts with host TRPC4AP; leading to prevent ubiquitination of TRPC4AP. Interacts with host PLSCR1; this interaction promotes ubiquitination and degradation of HBx and impairs HBx-mediated cell proliferation. In terms of processing, a fraction may be phosphorylated in insect cells and HepG2 cells, a human hepatoblastoma cell line. Phosphorylated in vitro by host protein kinase C or mitogen-activated protein kinase. N-acetylated in insect cells.

Its subcellular location is the host cytoplasm. It localises to the host nucleus. The protein localises to the host mitochondrion. Its function is as follows. Multifunctional protein that plays a role in silencing host antiviral defenses and promoting viral transcription. Does not seem to be essential for HBV infection. May be directly involved in development of cirrhosis and liver cancer (hepatocellular carcinoma). Most of cytosolic activities involve modulation of cytosolic calcium. The effect on apoptosis is controversial depending on the cell types in which the studies have been conducted. May induce apoptosis by localizing in mitochondria and causing loss of mitochondrial membrane potential. May also modulate apoptosis by binding host CFLAR, a key regulator of the death-inducing signaling complex (DISC). Promotes viral transcription by using the host E3 ubiquitin ligase DDB1 to target the SMC5-SMC6 complex to proteasomal degradation. This host complex would otherwise bind to viral episomal DNA, and prevents its transcription. Moderately stimulates transcription of many different viral and cellular transcription elements. Promoters and enhancers stimulated by HBx contain DNA binding sites for NF-kappa-B, AP-1, AP-2, c-EBP, ATF/CREB, or the calcium-activated factor NF-AT. This Woodchuck hepatitis B virus (isolate 7) (WHV) protein is Protein X.